A 263-amino-acid polypeptide reads, in one-letter code: MRIFRPWRLRCPALHLPSFPTFSIKCSLPPLPTDEDMCKSVTTGEWKKVFYEKMEEVKPADSWDFIIDPNLKHNVLAPGWKQYLELHASGRFHCSWCWHTWQSPHVVILFHMYLDKAQRAGSVRMRVFKQLCYECGTARLDESSMLEENIESLVDNLITSLREQCYGERGGHYRIHVASRQDNRRHRGEFCEACQEGIVHWKPSEKLLEEEATTYTFSRAPSPTKPQAETGSGCNFCSIPWCLFWATVLMLIIYLQFSFRTSV.

At 1-238 (MRIFRPWRLR…ETGSGCNFCS (238 aa)) the chain is on the cytoplasmic side. A 3CxxC-type zinc finger spans residues 88–197 (ASGRFHCSWC…GEFCEACQEG (110 aa)). Residues 239–259 (IPWCLFWATVLMLIIYLQFSF) traverse the membrane as a helical segment. At 260–263 (RTSV) the chain is on the extracellular side.

It belongs to the TMEM7 family. In terms of assembly, interacts with olfactory receptors. As to expression, predominantly expressed in olfactory and vomeronasal organs, in mature olfactory sensory neurons.

Its subcellular location is the cell membrane. Specifically promotes functional cell surface expression of olfactory receptors, but not of other GPCRs. The polypeptide is Receptor-transporting protein 1 (Rtp1) (Mus musculus (Mouse)).